A 256-amino-acid chain; its full sequence is uncharacterized protein (256 aa).

Disordered stretches follow at residues 1–171 and 185–256; these read MARG…QLKH and NGQR…LYND. Positions 14–39 form a coiled coil; the sequence is KRRSKVQEEEEHVEGSEEEVEEPEQK. 2 stretches are compositionally biased toward acidic residues: residues 21–35 and 64–92; these read EEEE…EVEE and SDDD…DNDE. Over residues 108 to 129 the composition is skewed to basic and acidic residues; it reads NRGDHESHDDNSDNEEQGDRGN. The span at 192 to 205 shows a compositional bias: gly residues; sequence KRGGPPRGSFGQRG. Positions 219-234 are enriched in basic and acidic residues; sequence RQGDTRDTRDTRDTRL.

This is an uncharacterized protein from Acanthamoeba polyphaga (Amoeba).